A 412-amino-acid chain; its full sequence is Intraflagellar transport protein che-13 (412 aa).

Disordered regions lie at residues 1–21 (MEEE…GSAI) and 162–193 (PPKE…NFLD). A compositionally biased stretch (acidic residues) spans 165 to 193 (EEDEDTAVDEQDEDDDNDDIVEEPMNFLD). Positions 302-393 (QLASMMSKFR…VQIGVFEQSI (92 aa)) form a coiled coil.

Belongs to the IFT57 family. In terms of assembly, component of the IFT complex B composed of at least che-2, che-13, dyf-1, dyf-3, dyf-6, dyf-11, dyf-13, ift-20, ift-74, ift-81, ifta-2, osm-1, osm-5 and osm-6.

It is found in the cytoplasm. The protein localises to the cytoskeleton. The protein resides in the cilium axoneme. In terms of biological role, component of the intraflagellar transport (IFT) complex B required for transport of proteins in the motile cilium. May be required for ciliary entrance and transport of specific ciliary cargo proteins such as che-3 which are related to motility. Required for the formation of chemosensory cilia that detect chemosensory cues. In Caenorhabditis elegans, this protein is Intraflagellar transport protein che-13.